Consider the following 503-residue polypeptide: Cobyric acid synthase (503 aa).

Residues 260 to 453 (KIGVAAIYFP…FHALFDESSV (194 aa)) enclose the GATase cobBQ-type domain. The Nucleophile role is filled by C341. H445 is an active-site residue.

The protein belongs to the CobB/CobQ family. CobQ subfamily.

It functions in the pathway cofactor biosynthesis; adenosylcobalamin biosynthesis. Catalyzes amidations at positions B, D, E, and G on adenosylcobyrinic A,C-diamide. NH(2) groups are provided by glutamine, and one molecule of ATP is hydrogenolyzed for each amidation. This Pelodictyon phaeoclathratiforme (strain DSM 5477 / BU-1) protein is Cobyric acid synthase.